The following is a 370-amino-acid chain: uncharacterized protein (370 aa).

An N-terminal signal peptide occupies residues 1–27 (MSSAANEGCVYLFIVVLRLSSFSCVNS). Asn-59, Asn-98, and Asn-126 each carry an N-linked (GlcNAc...) asparagine glycan. Disordered regions lie at residues 81–101 (SRSHTKKADTRGTADGKNTTA) and 123–167 (LSEN…CHQP). The span at 139 to 148 (HDDDDDDDLE) shows a compositional bias: acidic residues. Residues Asn-171, Asn-221, Asn-230, and Asn-262 are each glycosylated (N-linked (GlcNAc...) asparagine).

This is an uncharacterized protein from Saccharomyces cerevisiae (strain ATCC 204508 / S288c) (Baker's yeast).